A 96-amino-acid polypeptide reads, in one-letter code: U-stichotoxin-Hau2b (96 aa).

The first 18 residues, methionine 1–alanine 18, serve as a signal peptide directing secretion. 2 propeptides span residues lysine 19–arginine 29 and glutamate 30–proline 33. Intrachain disulfides connect cysteine 40-cysteine 51 and cysteine 43-cysteine 58. Propeptides lie at residues arginine 62–arginine 64 and glutamate 65–proline 68. Intrachain disulfides connect cysteine 75-cysteine 86 and cysteine 78-cysteine 93.

It belongs to the sea anemone BBH family.

The protein localises to the secreted. It localises to the nematocyst. In terms of biological role, neurotoxin that paralyzes freshwater crabs at high concentration. The protein is U-stichotoxin-Hau2b of Heteractis aurora (Banded sea anemone).